Here is a 152-residue protein sequence, read N- to C-terminus: Ribosome maturation factor RimP (152 aa).

It belongs to the RimP family.

It localises to the cytoplasm. In terms of biological role, required for maturation of 30S ribosomal subunits. The polypeptide is Ribosome maturation factor RimP (Pseudomonas aeruginosa (strain LESB58)).